An 890-amino-acid polypeptide reads, in one-letter code: Alanine--tRNA ligase (890 aa).

The Zn(2+) site is built by His567, His571, Cys680, and His684.

It belongs to the class-II aminoacyl-tRNA synthetase family. Requires Zn(2+) as cofactor.

The protein localises to the cytoplasm. It catalyses the reaction tRNA(Ala) + L-alanine + ATP = L-alanyl-tRNA(Ala) + AMP + diphosphate. In terms of biological role, catalyzes the attachment of alanine to tRNA(Ala) in a two-step reaction: alanine is first activated by ATP to form Ala-AMP and then transferred to the acceptor end of tRNA(Ala). Also edits incorrectly charged Ser-tRNA(Ala) and Gly-tRNA(Ala) via its editing domain. The protein is Alanine--tRNA ligase of Ruegeria pomeroyi (strain ATCC 700808 / DSM 15171 / DSS-3) (Silicibacter pomeroyi).